Reading from the N-terminus, the 609-residue chain is Proteasome-associated ATPase (609 aa).

The segment at 1 to 24 (MADSERSEAFGTPDDTPLSSNDAA) is disordered. Residues 19–96 (SSNDAAELEQ…LREEVDRLGQ (78 aa)) adopt a coiled-coil conformation. 296–301 (GCGKTL) contributes to the ATP binding site. Residues 608-609 (YL) are docks into pockets in the proteasome alpha-ring.

The protein belongs to the AAA ATPase family. As to quaternary structure, homohexamer. Assembles into a hexameric ring structure that caps the 20S proteasome core. Strongly interacts with the prokaryotic ubiquitin-like protein Pup through a hydrophobic interface; the interacting region of ARC lies in its N-terminal coiled-coil domain. There is one Pup binding site per ARC hexamer ring. Upon ATP-binding, the C-terminus of ARC interacts with the alpha-rings of the proteasome core, possibly by binding to the intersubunit pockets.

It participates in protein degradation; proteasomal Pup-dependent pathway. Functionally, ATPase which is responsible for recognizing, binding, unfolding and translocation of pupylated proteins into the bacterial 20S proteasome core particle. May be essential for opening the gate of the 20S proteasome via an interaction with its C-terminus, thereby allowing substrate entry and access to the site of proteolysis. Thus, the C-termini of the proteasomal ATPase may function like a 'key in a lock' to induce gate opening and therefore regulate proteolysis. This is Proteasome-associated ATPase from Mycobacterium ulcerans (strain Agy99).